Reading from the N-terminus, the 250-residue chain is Ferritin-2, chloroplastic (250 aa).

Residues 1-43 constitute a chloroplast transit peptide; sequence MLLRTAAASSLSLFNPNAEPSRSVPVLANNASRLVVRAAKGST. The interval 44–76 is extension peptide (EP); it reads NHRALTGVIFEPFEEVKKELDLVPTVPQASLAR. In terms of domain architecture, Ferritin-like diiron spans 77–230; it reads QKYVDESEAA…EYVAQLRRVG (154 aa). 5 residues coordinate Fe cation: E94, E129, H132, E178, and Q212.

It belongs to the ferritin family. Oligomer of 24 subunits. There are two types of subunits: L (light) chain and H (heavy) chain. The major chain can be light or heavy, depending on the species and tissue type. The functional molecule forms a roughly spherical shell with a diameter of 12 nm and contains a central cavity into which the insoluble mineral iron core is deposited.

It is found in the plastid. Its subcellular location is the chloroplast. The enzyme catalyses 4 Fe(2+) + O2 + 4 H(+) = 4 Fe(3+) + 2 H2O. Stores iron in a soluble, non-toxic, readily available form. Important for iron homeostasis. Has ferroxidase activity. Iron is taken up in the ferrous form and deposited as ferric hydroxides after oxidation. This chain is Ferritin-2, chloroplastic (PFE2), found in Vigna unguiculata (Cowpea).